Consider the following 111-residue polypeptide: Urease subunit beta (111 aa).

It belongs to the urease beta subunit family. In terms of assembly, heterotrimer of UreA (gamma), UreB (beta) and UreC (alpha) subunits. Three heterotrimers associate to form the active enzyme.

It is found in the cytoplasm. The enzyme catalyses urea + 2 H2O + H(+) = hydrogencarbonate + 2 NH4(+). The protein operates within nitrogen metabolism; urea degradation; CO(2) and NH(3) from urea (urease route): step 1/1. This chain is Urease subunit beta, found in Psychrobacter cryohalolentis (strain ATCC BAA-1226 / DSM 17306 / VKM B-2378 / K5).